The following is a 104-amino-acid chain: MSQVRKNDHNLMKVLLGPVISEKATMVAEKNEQVVFQVARDANKSDVKQAVELLFKVQVDSVQIVNQKGKPKRYGRFEGRRDHTKKAYVNLKPGQEISFEAEAN.

This sequence belongs to the universal ribosomal protein uL23 family. In terms of assembly, part of the 50S ribosomal subunit. Contacts protein L29, and trigger factor when it is bound to the ribosome.

Its function is as follows. One of the early assembly proteins it binds 23S rRNA. One of the proteins that surrounds the polypeptide exit tunnel on the outside of the ribosome. Forms the main docking site for trigger factor binding to the ribosome. The protein is Large ribosomal subunit protein uL23 of Polynucleobacter necessarius subsp. necessarius (strain STIR1).